Here is a 491-residue protein sequence, read N- to C-terminus: Glucose-6-phosphate exchanger SLC37A2 (491 aa).

A helical membrane pass occupies residues 5–25 (LAPGIWYRAFILLITFLIYTC). Residues asparagine 43, asparagine 52, and asparagine 58 are each glycosylated (N-linked (GlcNAc...) asparagine). Helical transmembrane passes span 78-98 (GAVDNAFLVAYAIGMFISGIF), 108-130 (LTAGMLLSGLFTSLFGLGYFWNI), 132-154 (VLWYFVLVQIFNGLVQTTGWPAV), 169-189 (LIMGIWNSHTSVGNILGSLLA), and 200-220 (SFVVPGVITAIMGIITFFFLI). A disordered region spans residues 229–257 (SPPQHHGNPEESQDQPEDPANGPSCNKES). 6 helical membrane passes run 292–312 (LCLLFAKLVSYTFLYWLPLYI), 328–348 (TLFDVGGIIGGILAGLVSDYI), 352–372 (ATTCCVMLILAAPMMFLYNHV), 377–397 (IGISIVMLLICGALVNGPYAL), 424–444 (AIIDGTGSIGAALGPLLAGLI), and 452–472 (VFYMLIAADVLACLLLCRLVY).

The protein belongs to the major facilitator superfamily. Organophosphate:Pi antiporter (OPA) (TC 2.A.1.4) family.

It is found in the endoplasmic reticulum membrane. It catalyses the reaction D-glucose 6-phosphate(in) + phosphate(out) = D-glucose 6-phosphate(out) + phosphate(in). Inhibited by vanadate but not by chlorogenic acid. Its function is as follows. Inorganic phosphate and glucose-6-phosphate antiporter. May transport cytoplasmic glucose-6-phosphate into the lumen of the endoplasmic reticulum and translocate inorganic phosphate into the opposite direction. Independent of a lumenal glucose-6-phosphatase. May not play a role in homeostatic regulation of blood glucose levels. The polypeptide is Glucose-6-phosphate exchanger SLC37A2 (Bos taurus (Bovine)).